Here is a 393-residue protein sequence, read N- to C-terminus: NAD(P)H-quinone oxidoreductase subunit H, chloroplastic (393 aa).

Belongs to the complex I 49 kDa subunit family. As to quaternary structure, NDH is composed of at least 16 different subunits, 5 of which are encoded in the nucleus.

It is found in the plastid. The protein localises to the chloroplast thylakoid membrane. It carries out the reaction a plastoquinone + NADH + (n+1) H(+)(in) = a plastoquinol + NAD(+) + n H(+)(out). It catalyses the reaction a plastoquinone + NADPH + (n+1) H(+)(in) = a plastoquinol + NADP(+) + n H(+)(out). NDH shuttles electrons from NAD(P)H:plastoquinone, via FMN and iron-sulfur (Fe-S) centers, to quinones in the photosynthetic chain and possibly in a chloroplast respiratory chain. The immediate electron acceptor for the enzyme in this species is believed to be plastoquinone. Couples the redox reaction to proton translocation, and thus conserves the redox energy in a proton gradient. The polypeptide is NAD(P)H-quinone oxidoreductase subunit H, chloroplastic (Helianthus annuus (Common sunflower)).